A 71-amino-acid chain; its full sequence is Prokaryotic ubiquitin-like protein Pup (71 aa).

Low complexity predominate over residues 1–18 (MATRDSGGQSQTGRSQQG). The interval 1–42 (MATRDSGGQSQTGRSQQGEEIEDVTTEASAEAAERHAEITED) is disordered. The tract at residues 27–65 (EASAEAAERHAEITEDVDDLLDEIDSVLEENAEEFVRGY) is ARC ATPase binding. The stretch at 29–60 (SAEAAERHAEITEDVDDLLDEIDSVLEENAEE) forms a coiled coil. Glu71 is covalently cross-linked (Isoglutamyl lysine isopeptide (Glu-Lys) (interchain with K-? in acceptor proteins)).

It belongs to the prokaryotic ubiquitin-like protein family. In terms of assembly, strongly interacts with the proteasome-associated ATPase ARC through a hydrophobic interface; the interacting region of Pup lies in its C-terminal half. There is one Pup binding site per ARC hexamer ring.

The protein operates within protein degradation; proteasomal Pup-dependent pathway. In terms of biological role, protein modifier that is covalently attached to lysine residues of substrate proteins, thereby targeting them for proteasomal degradation. The tagging system is termed pupylation. The chain is Prokaryotic ubiquitin-like protein Pup from Salinispora tropica (strain ATCC BAA-916 / DSM 44818 / JCM 13857 / NBRC 105044 / CNB-440).